A 199-amino-acid chain; its full sequence is uncharacterized protein (199 aa).

The segment at 1-41 is disordered; sequence MKFKRDENQNSTHHRGNKNNTNNDDDDKEEEEEIINDTTMP. Residues 23–35 show a composition bias toward acidic residues; that stretch reads NDDDDKEEEEEII. 3 helical membrane-spanning segments follow: residues 73–93, 96–116, and 166–186; these read LILDLVGFFTQIIPIFGFAFW, ISTYLIFKVYGSGLHLCVSFL, and IAIAVALIAIYKIISYFSPYL.

It is found in the membrane. This is an uncharacterized protein from Dictyostelium discoideum (Social amoeba).